The sequence spans 649 residues: Acetyl-coenzyme A synthetase (649 aa).

Residues 189–192 (RGGK), T311, and N335 each bind CoA. Residues 387–389 (GEP), 411–416 (DTWWQT), D500, and R515 contribute to the ATP site. S523 contacts CoA. R526 contacts ATP. Positions 537, 539, and 542 each coordinate Mg(2+). A CoA-binding site is contributed by R584. Position 609 is an N6-acetyllysine (K609).

The protein belongs to the ATP-dependent AMP-binding enzyme family. It depends on Mg(2+) as a cofactor. Post-translationally, acetylated. Deacetylation by the SIR2-homolog deacetylase activates the enzyme.

The catalysed reaction is acetate + ATP + CoA = acetyl-CoA + AMP + diphosphate. Catalyzes the conversion of acetate into acetyl-CoA (AcCoA), an essential intermediate at the junction of anabolic and catabolic pathways. AcsA undergoes a two-step reaction. In the first half reaction, AcsA combines acetate with ATP to form acetyl-adenylate (AcAMP) intermediate. In the second half reaction, it can then transfer the acetyl group from AcAMP to the sulfhydryl group of CoA, forming the product AcCoA. The polypeptide is Acetyl-coenzyme A synthetase (Sinorhizobium medicae (strain WSM419) (Ensifer medicae)).